Reading from the N-terminus, the 223-residue chain is N-terminal Xaa-Pro-Lys N-methyltransferase 1 (223 aa).

Met-1 carries the N-acetylmethionine modification. An N-acetylthreonine; in N-terminal Xaa-Pro-Lys N-methyltransferase 1, N-terminally processed modification is found at Thr-2. S-adenosyl-L-methionine contacts are provided by residues Gly-69, Arg-74, 91–93, 119–120, and Gln-135; these read DVT and LQ.

This sequence belongs to the methyltransferase superfamily. NTM1 family.

It is found in the nucleus. The catalysed reaction is N-terminal L-alanyl-L-prolyl-L-lysyl-[protein] + 3 S-adenosyl-L-methionine = N-terminal N,N,N-trimethyl-L-alanyl-L-prolyl-L-lysyl-[protein] + 3 S-adenosyl-L-homocysteine + 3 H(+). It catalyses the reaction N-terminal L-seryl-L-prolyl-L-lysyl-[protein] + 3 S-adenosyl-L-methionine = N-terminal N,N,N-trimethyl-L-seryl-L-prolyl-L-lysyl-[protein] + 3 S-adenosyl-L-homocysteine + 3 H(+). It carries out the reaction N-terminal L-prolyl-L-prolyl-L-lysyl-[protein] + 2 S-adenosyl-L-methionine = N-terminal N,N-dimethyl-L-prolyl-L-prolyl-L-lysyl-[protein] + 2 S-adenosyl-L-homocysteine + 2 H(+). Distributive alpha-N-methyltransferase that methylates the N-terminus of target proteins containing the N-terminal motif [Ala/Gly/Pro/Ser]-Pro-Lys when the initiator Met is cleaved. Specifically catalyzes mono-, di- or tri-methylation of the exposed alpha-amino group of the Ala, Gly or Ser residue in the [Ala/Gly/Ser]-Pro-Lys motif and mono- or di-methylation of Pro in the Pro-Pro-Lys motif. Some of the substrates may be primed by NTMT2-mediated monomethylation. Catalyzes the trimethylation of the N-terminal Gly in CENPA (after removal of Met-1). Responsible for the N-terminal methylation of KLHL31, MYL2, MYL3, RB1, RCC1, RPL23A and SET. Required during mitosis for normal bipolar spindle formation and chromosome segregation via its action on RCC1. The sequence is that of N-terminal Xaa-Pro-Lys N-methyltransferase 1 (Ntmt1) from Rattus norvegicus (Rat).